A 180-amino-acid chain; its full sequence is ATP synthase subunit delta (180 aa).

It belongs to the ATPase delta chain family. F-type ATPases have 2 components, F(1) - the catalytic core - and F(0) - the membrane proton channel. F(1) has five subunits: alpha(3), beta(3), gamma(1), delta(1), epsilon(1). F(0) has three main subunits: a(1), b(2) and c(10-14). The alpha and beta chains form an alternating ring which encloses part of the gamma chain. F(1) is attached to F(0) by a central stalk formed by the gamma and epsilon chains, while a peripheral stalk is formed by the delta and b chains.

The protein localises to the cell inner membrane. F(1)F(0) ATP synthase produces ATP from ADP in the presence of a proton or sodium gradient. F-type ATPases consist of two structural domains, F(1) containing the extramembraneous catalytic core and F(0) containing the membrane proton channel, linked together by a central stalk and a peripheral stalk. During catalysis, ATP synthesis in the catalytic domain of F(1) is coupled via a rotary mechanism of the central stalk subunits to proton translocation. Its function is as follows. This protein is part of the stalk that links CF(0) to CF(1). It either transmits conformational changes from CF(0) to CF(1) or is implicated in proton conduction. The chain is ATP synthase subunit delta from Parabacteroides distasonis (strain ATCC 8503 / DSM 20701 / CIP 104284 / JCM 5825 / NCTC 11152).